The sequence spans 490 residues: 53 kDa membrane antigen A (490 aa).

Residues 1-16 form the signal peptide; sequence MKKKLFFALLVLILSS. Residue cysteine 17 is the site of N-palmitoyl cysteine attachment. Cysteine 17 carries the S-diacylglycerol cysteine lipid modification.

It is found in the cell membrane. This is 53 kDa membrane antigen A (tdpA) from Treponema denticola.